Here is a 767-residue protein sequence, read N- to C-terminus: Ribonucleoside-diphosphate reductase subunit alpha (767 aa).

The disordered stretch occupies residues 1–30 (MHPTLISAPISSSANDAHAGTSQGSHQGHR). The span at 9 to 26 (PISSSANDAHAGTSQGSH) shows a compositional bias: polar residues. Residues 31–120 (IQVIRRDGSS…VWSLWKDTLV (90 aa)) form the ATP-cone domain. Substrate contacts are provided by residues Thr-228, 243–244 (SC), Gly-272, 460–464 (NLCCE), and 631–635 (PNTSS). A disulfide bridge links Cys-244 with Cys-478. Asn-460 serves as the catalytic Proton acceptor. Catalysis depends on Cys-462, which acts as the Cysteine radical intermediate. Catalysis depends on Glu-464, which acts as the Proton acceptor.

This sequence belongs to the ribonucleoside diphosphate reductase large chain family. Tetramer of two alpha and two beta subunits.

The catalysed reaction is a 2'-deoxyribonucleoside 5'-diphosphate + [thioredoxin]-disulfide + H2O = a ribonucleoside 5'-diphosphate + [thioredoxin]-dithiol. With respect to regulation, under complex allosteric control mediated by deoxynucleoside triphosphates and ATP binding. The type of nucleotide bound at the specificity site determines substrate preference. It seems probable that ATP makes the enzyme reduce CDP and UDP, dGTP favors ADP reduction and dTTP favors GDP reduction. Functionally, provides the precursors necessary for DNA synthesis. Catalyzes the biosynthesis of deoxyribonucleotides from the corresponding ribonucleotides. In Synechocystis sp. (strain ATCC 27184 / PCC 6803 / Kazusa), this protein is Ribonucleoside-diphosphate reductase subunit alpha (nrdA).